Reading from the N-terminus, the 313-residue chain is Protein-glutamine deamidase Cif (313 aa).

Active-site residues include C128, H186, and Q205.

This sequence belongs to the Cif family.

It is found in the secreted. The protein localises to the host nucleus. It carries out the reaction L-glutaminyl-[protein] + H2O = L-glutamyl-[protein] + NH4(+). Its function is as follows. Protein-glutamine deamidase effector that inhibits the host cell cycle and other key cellular processes such as the actin network and programmed-cell death. Acts by mediating the side chain deamidation of 'Gln-40' of host NEDD8, converting it to glutamate, thereby abolishing the activity of cullin-RING-based E3 ubiquitin-protein ligase complexes (CRL complexes). Inactivation of CRL complexes prevents ubiquitination and subsequent degradation of the cyclin-dependent kinase inhibitors CDKN1A/p21 and CDKN1B/p27, leading to G1 and G2 cell cycle arrests in host cells. Deamidation of 'Gln-40' of host NEDD8 also triggers macrophage-specific programmed cell death. Also able to catalyze deamidation of 'Gln-40' of host ubiquitin in vitro; however, NEDD8 constitutes the preferred substrate in vivo. This Photorhabdus laumondii subsp. laumondii (strain DSM 15139 / CIP 105565 / TT01) (Photorhabdus luminescens subsp. laumondii) protein is Protein-glutamine deamidase Cif.